The primary structure comprises 1001 residues: 2-oxoglutarate dehydrogenase E1 component (1001 aa).

The protein belongs to the alpha-ketoglutarate dehydrogenase family. As to quaternary structure, homodimer. Part of the 2-oxoglutarate dehydrogenase (OGDH) complex composed of E1 (2-oxoglutarate dehydrogenase), E2 (dihydrolipoamide succinyltransferase) and E3 (dihydrolipoamide dehydrogenase); the complex contains multiple copies of the three enzymatic components (E1, E2 and E3). It depends on thiamine diphosphate as a cofactor.

The catalysed reaction is N(6)-[(R)-lipoyl]-L-lysyl-[protein] + 2-oxoglutarate + H(+) = N(6)-[(R)-S(8)-succinyldihydrolipoyl]-L-lysyl-[protein] + CO2. In terms of biological role, E1 component of the 2-oxoglutarate dehydrogenase (OGDH) complex which catalyzes the decarboxylation of 2-oxoglutarate, the first step in the conversion of 2-oxoglutarate to succinyl-CoA and CO(2). In Brucella anthropi (strain ATCC 49188 / DSM 6882 / CCUG 24695 / JCM 21032 / LMG 3331 / NBRC 15819 / NCTC 12168 / Alc 37) (Ochrobactrum anthropi), this protein is 2-oxoglutarate dehydrogenase E1 component.